The following is a 433-amino-acid chain: MENKINSQSLFQEALQYIPGGVNSPVRAFKSVGQEFPRFIKSAKGAYLYDVDWNKYIDYIGSWGPMILGHGDDDVLEAIQCQLKNGLSYGAPCKQEIELAKKIVELMPNIEQVRFVNSGTEATMSAIRLARAYTGRNKIIKFEGCYHGHADEFLVAAGSGALSLGQPNSPGVPEDVVKDTLVASFNDIESIQALFEKYKNEIACIIVEPIAGNMNMIFPQDDFLAKLRAVCDENNSLLIFDEVMTGFRVALGGAQSIYDVKPDLTTLGKVIGGGMPVGAFGGRKEIMQEVSPAGPVYQAGTLSGNPIAMAAGIKTLEKVSQDDFFVKLEAKAKQLVDGLNEAARVYDFNFHAKYLGGMFGLFFCNEKVAVNTFTDLGKTNLKMFNKYFAYMLDNGVYLAPSAYEAGFISIAHSDEDIEKTICLTKKFFQDNQS.

N6-(pyridoxal phosphate)lysine is present on lysine 269.

This sequence belongs to the class-III pyridoxal-phosphate-dependent aminotransferase family. HemL subfamily. Homodimer. It depends on pyridoxal 5'-phosphate as a cofactor.

Its subcellular location is the cytoplasm. The catalysed reaction is (S)-4-amino-5-oxopentanoate = 5-aminolevulinate. It functions in the pathway porphyrin-containing compound metabolism; protoporphyrin-IX biosynthesis; 5-aminolevulinate from L-glutamyl-tRNA(Glu): step 2/2. This chain is Glutamate-1-semialdehyde 2,1-aminomutase, found in Francisella philomiragia subsp. philomiragia (strain ATCC 25017 / CCUG 19701 / FSC 153 / O#319-036).